Reading from the N-terminus, the 81-residue chain is Photosystem I iron-sulfur center (81 aa).

4Fe-4S ferredoxin-type domains follow at residues Ser2–Trp31 and Ile39–Tyr68. Residues Cys11, Cys14, Cys17, Cys21, Cys48, Cys51, Cys54, and Cys58 each contribute to the [4Fe-4S] cluster site.

The eukaryotic PSI reaction center is composed of at least 11 subunits. The cofactor is [4Fe-4S] cluster.

It is found in the plastid. The protein localises to the chloroplast thylakoid membrane. It catalyses the reaction reduced [plastocyanin] + hnu + oxidized [2Fe-2S]-[ferredoxin] = oxidized [plastocyanin] + reduced [2Fe-2S]-[ferredoxin]. Apoprotein for the two 4Fe-4S centers FA and FB of photosystem I (PSI); essential for photochemical activity. FB is the terminal electron acceptor of PSI, donating electrons to ferredoxin. The C-terminus interacts with PsaA/B/D and helps assemble the protein into the PSI complex. Required for binding of PsaD and PsaE to PSI. PSI is a plastocyanin-ferredoxin oxidoreductase, converting photonic excitation into a charge separation, which transfers an electron from the donor P700 chlorophyll pair to the spectroscopically characterized acceptors A0, A1, FX, FA and FB in turn. This is Photosystem I iron-sulfur center from Acorus calamus (Sweet flag).